The sequence spans 252 residues: Adenosylcobinamide-GDP ribazoletransferase (252 aa).

7 helical membrane passes run 4–24, 38–58, 60–80, 113–133, 141–161, 190–210, and 232–252; these read LFKG…PYVE, PIIG…INYL, ISIV…TGML, FSVI…HSFL, ILMF…ITII, LVCI…LLIV, and VAGF…CLFT.

The protein belongs to the CobS family. Requires Mg(2+) as cofactor.

The protein localises to the cell membrane. The catalysed reaction is alpha-ribazole + adenosylcob(III)inamide-GDP = adenosylcob(III)alamin + GMP + H(+). It catalyses the reaction alpha-ribazole 5'-phosphate + adenosylcob(III)inamide-GDP = adenosylcob(III)alamin 5'-phosphate + GMP + H(+). It participates in cofactor biosynthesis; adenosylcobalamin biosynthesis; adenosylcobalamin from cob(II)yrinate a,c-diamide: step 7/7. Joins adenosylcobinamide-GDP and alpha-ribazole to generate adenosylcobalamin (Ado-cobalamin). Also synthesizes adenosylcobalamin 5'-phosphate from adenosylcobinamide-GDP and alpha-ribazole 5'-phosphate. This Clostridium botulinum (strain Alaska E43 / Type E3) protein is Adenosylcobinamide-GDP ribazoletransferase.